A 309-amino-acid chain; its full sequence is Aspartate carbamoyltransferase catalytic subunit (309 aa).

R58 and T59 together coordinate carbamoyl phosphate. Residue K86 coordinates L-aspartate. Carbamoyl phosphate-binding residues include R108, H136, and Q139. R169 and R223 together coordinate L-aspartate. Carbamoyl phosphate contacts are provided by G265 and P266.

This sequence belongs to the aspartate/ornithine carbamoyltransferase superfamily. ATCase family. Heterododecamer (2C3:3R2) of six catalytic PyrB chains organized as two trimers (C3), and six regulatory PyrI chains organized as three dimers (R2).

The enzyme catalyses carbamoyl phosphate + L-aspartate = N-carbamoyl-L-aspartate + phosphate + H(+). Its pathway is pyrimidine metabolism; UMP biosynthesis via de novo pathway; (S)-dihydroorotate from bicarbonate: step 2/3. In terms of biological role, catalyzes the condensation of carbamoyl phosphate and aspartate to form carbamoyl aspartate and inorganic phosphate, the committed step in the de novo pyrimidine nucleotide biosynthesis pathway. The chain is Aspartate carbamoyltransferase catalytic subunit from Akkermansia muciniphila (strain ATCC BAA-835 / DSM 22959 / JCM 33894 / BCRC 81048 / CCUG 64013 / CIP 107961 / Muc).